A 283-amino-acid polypeptide reads, in one-letter code: Shikimate dehydrogenase (NADP(+)) (283 aa).

Residues 19–21 and Thr66 contribute to the shikimate site; that span reads SRS. Lys70 (proton acceptor) is an active-site residue. Position 82 (Glu82) interacts with NADP(+). Residues Asn91 and Asp107 each coordinate shikimate. NADP(+) is bound by residues 133-137 and Ile226; that span reads GAGGA. Tyr228 is a shikimate binding site. Gly249 is a binding site for NADP(+).

The protein belongs to the shikimate dehydrogenase family. Homodimer.

It carries out the reaction shikimate + NADP(+) = 3-dehydroshikimate + NADPH + H(+). It participates in metabolic intermediate biosynthesis; chorismate biosynthesis; chorismate from D-erythrose 4-phosphate and phosphoenolpyruvate: step 4/7. Functionally, involved in the biosynthesis of the chorismate, which leads to the biosynthesis of aromatic amino acids. Catalyzes the reversible NADPH linked reduction of 3-dehydroshikimate (DHSA) to yield shikimate (SA). This chain is Shikimate dehydrogenase (NADP(+)), found in Rhodospirillum rubrum (strain ATCC 11170 / ATH 1.1.1 / DSM 467 / LMG 4362 / NCIMB 8255 / S1).